Reading from the N-terminus, the 909-residue chain is Protein translocase subunit SecA (909 aa).

ATP-binding positions include Gln87, 105–109 (GEGKT), and Asp507. A disordered region spans residues 834 to 909 (EAVEEQRRRQ…KYKQCCGKLS (76 aa)). Residues 837 to 848 (EEQRRRQGDMQY) are compositionally biased toward basic and acidic residues. Gly residues predominate over residues 859 to 871 (QGAGGEGAAGGTA). Zn(2+)-binding residues include Cys893, Cys895, Cys904, and Cys905.

It belongs to the SecA family. Monomer and homodimer. Part of the essential Sec protein translocation apparatus which comprises SecA, SecYEG and auxiliary proteins SecDF-YajC and YidC. The cofactor is Zn(2+).

Its subcellular location is the cell inner membrane. It localises to the cytoplasm. The enzyme catalyses ATP + H2O + cellular proteinSide 1 = ADP + phosphate + cellular proteinSide 2.. Part of the Sec protein translocase complex. Interacts with the SecYEG preprotein conducting channel. Has a central role in coupling the hydrolysis of ATP to the transfer of proteins into and across the cell membrane, serving both as a receptor for the preprotein-SecB complex and as an ATP-driven molecular motor driving the stepwise translocation of polypeptide chains across the membrane. This is Protein translocase subunit SecA from Alkalilimnicola ehrlichii (strain ATCC BAA-1101 / DSM 17681 / MLHE-1).